Consider the following 341-residue polypeptide: MATWRRDGRLTGSQRLLCAGLAGAFSLSLTAPLELATVLAQVGKVQSHSLGLWATGRRVWLSEGPRALWKGNGVACLRLFPCSMVQLAAYRKFVVLFMDDLGRISQWSSIVTGSLAGMVSTIVTYPTDLIKTRLMVQNVLEPSYRGLIHAFSTIYQQEGFLALYRGVSLTVLGAVPFSAGSLLVYMNLEKVWNGPRDRFSHLQNFANVCVAAAVSQTLSFPFDTVKRKMQAQSPYLPHYGGVDVHFSGAADCFRQIVKTQGVLGLWNGLTANLLKVVPYFGVMFSMFEFCKRIFLYQNGYTLSPLTYKLTPGVDQSLKPQELRELKKFFKRRKLHSKTPPW.

Solcar repeat units follow at residues 11–101 (TGSQ…MDDL), 105–185 (SQWS…LLVY), and 200–298 (SHLQ…LYQN). The next 6 helical transmembrane spans lie at 16 to 36 (LLCA…LELA), 68 to 88 (LWKG…VQLA), 110 to 130 (IVTG…TDLI), 166 to 186 (GVSL…LVYM), 205 to 225 (FANV…FDTV), and 262 to 282 (VLGL…YFGV).

This sequence belongs to the mitochondrial carrier (TC 2.A.29) family.

It is found in the mitochondrion inner membrane. In Mus musculus (Mouse), this protein is Solute carrier family 25 member 43 (Slc25a43).